Here is a 156-residue protein sequence, read N- to C-terminus: uncharacterized protein (156 aa).

The stretch at 43–84 (LKIDENEVKLEISVEKLKNLSRVCENIEQVVDKVVEELRYAL) forms a coiled coil.

This is an uncharacterized protein from Aquifex aeolicus (strain VF5).